We begin with the raw amino-acid sequence, 156 residues long: Transcription antitermination protein NusB (156 aa).

It belongs to the NusB family.

In terms of biological role, involved in transcription antitermination. Required for transcription of ribosomal RNA (rRNA) genes. Binds specifically to the boxA antiterminator sequence of the ribosomal RNA (rrn) operons. The polypeptide is Transcription antitermination protein NusB (Mycobacterium tuberculosis (strain CDC 1551 / Oshkosh)).